A 273-amino-acid chain; its full sequence is Undecaprenyl-diphosphatase (273 aa).

The next 7 helical transmembrane spans lie at 6 to 26 (SLLV…LPVS), 45 to 65 (AKTF…VMFW), 90 to 110 (LTLI…LLFH), 116 to 136 (LFNP…LIAA), 190 to 210 (YAAS…ATAL), 222 to 242 (GDIP…LVAI), and 252 to 272 (ISFI…YVVF).

It belongs to the UppP family.

It localises to the cell inner membrane. It carries out the reaction di-trans,octa-cis-undecaprenyl diphosphate + H2O = di-trans,octa-cis-undecaprenyl phosphate + phosphate + H(+). Functionally, catalyzes the dephosphorylation of undecaprenyl diphosphate (UPP). Confers resistance to bacitracin. In Escherichia fergusonii (strain ATCC 35469 / DSM 13698 / CCUG 18766 / IAM 14443 / JCM 21226 / LMG 7866 / NBRC 102419 / NCTC 12128 / CDC 0568-73), this protein is Undecaprenyl-diphosphatase.